The chain runs to 251 residues: tRNA (guanine-N(1)-)-methyltransferase (251 aa).

S-adenosyl-L-methionine contacts are provided by residues Gly113 and 133-138 (IGDYVL).

Belongs to the RNA methyltransferase TrmD family. As to quaternary structure, homodimer.

It localises to the cytoplasm. It carries out the reaction guanosine(37) in tRNA + S-adenosyl-L-methionine = N(1)-methylguanosine(37) in tRNA + S-adenosyl-L-homocysteine + H(+). Functionally, specifically methylates guanosine-37 in various tRNAs. This is tRNA (guanine-N(1)-)-methyltransferase from Pectobacterium carotovorum subsp. carotovorum (strain PC1).